A 404-amino-acid chain; its full sequence is Starvation-sensing protein RspA (404 aa).

The protein belongs to the mandelate racemase/muconate lactonizing enzyme family.

Functionally, probably involved in the degradation of homoserine lactone (HSL) or of a metabolite of HSL that signals starvation. The chain is Starvation-sensing protein RspA from Escherichia coli (strain K12).